We begin with the raw amino-acid sequence, 649 residues long: Quinol oxidase subunit 1 (649 aa).

Over 1 to 13 (MKFKWDEFFVTGD) the chain is Extracellular. A helical transmembrane segment spans residues 14–34 (PLILGAQVSIALSTIAIIFVL). At 35–55 (TYFKKWKWLWSEWITTVDHKK) the chain is on the cytoplasmic side. Residues 56 to 76 (LGIMYIISAVIMLFRGGVDGL) form a helical membrane-spanning segment. Residues 77–104 (MMRAQLALPNNSFLDSNHYNEIFTTHGT) lie on the Extracellular side of the membrane. His102 contacts Fe(II)-heme a. Residues 105 to 125 (IMIIFMAMPFLIGLINVVVPL) form a helical membrane-spanning segment. Residues 126–139 (QIGARDVAFPYLNN) are Cytoplasmic-facing. A helical transmembrane segment spans residues 140–160 (LSFWTFFVGAMLFNISFVIGG). The Extracellular segment spans residues 161 to 187 (SPNAGWTSYMPLASNDMSPGPGENYYL). Residues 188–208 (LGLQIAGIGTLMTGINFMVTI) form a helical membrane-spanning segment. The Cytoplasmic portion of the chain corresponds to 209–228 (LKMRTKGMTLMRMPMFTWTT). Residues 229-249 (LITMVIIVFAFPVLTVALALL) traverse the membrane as a helical segment. At 250–273 (SFDRLFGAHFFTLEAGGMPMLWAN) the chain is on the extracellular side. Residues 274–294 (LFWIWGHPEVYIVILPAFGIF) form a helical membrane-spanning segment. Cu cation is bound by residues His280 and Tyr284. A cross-link (1'-histidyl-3'-tyrosine (His-Tyr)) is located at residues 280-284 (HPEVY). Residues 295–305 (SEIISSFARKQ) are Cytoplasmic-facing. Residues 306–326 (LFGYTAMVGSIIAISVLSFLV) form a helical membrane-spanning segment. Residues 327–342 (WTHHFFTMGNSASVNS) lie on the Extracellular side of the membrane. His329 and His330 together coordinate Cu cation. Residues 343 to 363 (FFSITTMAISIPTGVKIFNWL) traverse the membrane as a helical segment. The Cytoplasmic segment spans residues 364–376 (FTMYKGRISFTTP). Residues 377 to 397 (MLWALAFIPNFVIGGVTGVML) form a helical membrane-spanning segment. Residues 398 to 415 (AMAAADYQYHNTYFLVSH) lie on the Extracellular side of the membrane. Heme a3 is bound at residue His415. The chain crosses the membrane as a helical span at residues 416–436 (FHYVLIAGTVFACFAGFIFWY). A Fe(II)-heme a-binding site is contributed by His417. At 437 to 451 (PKMFGHKLNERIGKW) the chain is on the cytoplasmic side. The helical transmembrane segment at 452–472 (FFWIFMIGFNICFFPQYFLGL) threads the bilayer. The Extracellular portion of the chain corresponds to 473-492 (QGMPRRIYTYGPNDGWTTLN). The chain crosses the membrane as a helical span at residues 493 to 513 (FISTVGAFMMGVGFLILCYNI). Residues 514 to 585 (YYSFRYSTRE…KFKKIHMPSN (72 aa)) lie on the Cytoplasmic side of the membrane. Residues 586–603 (SGRPFFMSVAFGIAGFGL) traverse the membrane as a helical segment. The Extracellular segment spans residues 604–606 (VFE). The helical transmembrane segment at 607 to 624 (WYWMGVVGLIGVLLCMVL) threads the bilayer. Residues 625–649 (RSFEYDNGYYISVDEIKETERKISE) lie on the Cytoplasmic side of the membrane.

Belongs to the heme-copper respiratory oxidase family. Cu cation is required as a cofactor. It depends on ferriheme a as a cofactor. The cofactor is Heme A3..

Its subcellular location is the cell membrane. The enzyme catalyses 2 a quinol + O2 = 2 a quinone + 2 H2O. Its pathway is energy metabolism; oxidative phosphorylation. Functionally, catalyzes quinol oxidation with the concomitant reduction of oxygen to water. Major component for energy conversion during vegetative growth. The chain is Quinol oxidase subunit 1 (qoxB) from Bacillus spizizenii (strain ATCC 23059 / NRRL B-14472 / W23) (Bacillus subtilis subsp. spizizenii).